Consider the following 385-residue polypeptide: MNKDQKQLRIGIVAGELSGDILGEGLIKALKKHFPDAIFEGIAGPKMQAQGCNTLYDMDELSVMGLVEVLGRLPRLLKIRKQLVQHFIDNPPDVFIGIDAPDFNLRVEKPLKDAGIKTVQYVSPSVWAWREKRIHTISAATNLVLALLPFEKEFYDKHQVPCTFVGHTLADDIALEHDDSKARKELGLSPDDKVLALLPGSRGSEVGLLSETYIKTAVQLQAQNPALKIVVPLVNAKRKAQFTEILNATAPTLKISLLDGQSKQAMQAADAILLASGTATLEGMLYKKPMVVGYKIKPLSYWIFKTLFTFNIKYFSLPNLLADEELVPEFLQSECNVANLTQALTPMLNTDNQALKARFLAIHKKIRLNASEQAANAVAELINAN.

It belongs to the LpxB family.

It carries out the reaction a lipid X + a UDP-2-N,3-O-bis[(3R)-3-hydroxyacyl]-alpha-D-glucosamine = a lipid A disaccharide + UDP + H(+). It participates in bacterial outer membrane biogenesis; LPS lipid A biosynthesis. Functionally, condensation of UDP-2,3-diacylglucosamine and 2,3-diacylglucosamine-1-phosphate to form lipid A disaccharide, a precursor of lipid A, a phosphorylated glycolipid that anchors the lipopolysaccharide to the outer membrane of the cell. The sequence is that of Lipid-A-disaccharide synthase from Pseudoalteromonas translucida (strain TAC 125).